The chain runs to 131 residues: Profilin (131 aa).

Belongs to the profilin family. In terms of assembly, occurs in many kinds of cells as a complex with monomeric actin in a 1:1 ratio.

It localises to the cytoplasm. It is found in the cytoskeleton. Its function is as follows. Binds to actin and affects the structure of the cytoskeleton. At high concentrations, profilin prevents the polymerization of actin, whereas it enhances it at low concentrations. By binding to PIP2, it inhibits the formation of IP3 and DG. The polypeptide is Profilin (PRO1) (Cynodon dactylon (Bermuda grass)).